The chain runs to 1288 residues: MEGSFQFNKSKQTNNNSSLDSNNIINDNINNNLNFENNNNNNNNNNNNNNNNNNNNNNNNTNNNNTTNDTSKTSANSTSTEDDEEDILGNRKKDTTGSRVLPMDTSLTGAAEPSKKRKNTQDDSEVEVQYHPQKRASFSLNISPTQLQNDLSLNIFNVSNSNNNNNSNNNNNNNNNNNNNNNKINNNSNLILNSSVDSTTSSNNNNNKNSNDNQQPQQQPEEIEGELNRERQERDKMLHEEAEIEQYKYGDGEEGENYEIMVTPHHRTSFGHITSANSDETTNNESGSPINSRKMVTDEEDPHSSHNEDHQSDQDNHGQFMNDEHQSTDDDQNKSDNEKESESARNSGDLQQKVHNSKDESTVSTPQHIFNNGNGEGEEEDDDDEEYDVPLRIQTVANNKSTKLSLSNCWLKVIPTDVWSILELRDLDLSANQLKKVSKSIGLLVHLKRLRLNHNQLTALPKELYSLPRLTTLYLNNNNFKVVPKEINRLTSLKTLDLSFNQITDISPQTNLHQMTNLVELRLRYNQLSSLPQNMLESNHLQVLWLEGNRLPLNKAILKKSPSEILSFLRGYKPPNKKVNDKVINKAHVNPALPPIDTASTIAVAQVFAQKELDTKKRKKENLDDFKKQHIETELKLKQLEEELQIANAKATKFEEEASLLQQQFNNPNTPTGPSLNLPSILLNQPHLGWDQQQQQQQQQSPNVSTPPISTSPVLTGGQQVVNGISQISLLSPTQQINNPPSPVTQFNQASPQHNNNQQQQQQQQQQQQQQQQQQQQQQQQQQQQQQQQQQQQQQQQQQQQNGSPQQPHVNNNNNNNIQQNKDHQFPVPTIPAKIIEVEKPFEWEVPLSEIAIGARIGRGGYGQVFRGSWRGTEVAVKMLFNDNVNLKLISDLRKEVDLLCKLRHPNIVLFMGACTEPSSPCIVTEYLSRGSLANILLDESIEMDWGLRLQLGFDCARGMTYLHSRNPIIIHRDLKTDNLLVDDSWQVKVADFGLATVKSHTFAKTMCGTTGWVAPEVLAEEGYTEKADVYSYAIVLWELLTRLIPYAGKNTMQVVRSIDRGERLPMPAWCPPKYAALMNRCWETDPTHRPSFPEILPIMEGMISEFQKEKKESIAQGRPIPYVGPPEKDPSNKQPPQNMATTIQQQLAQQQPQQLLEQQILLQVQQQAQLQHLQQQLEQQQKLQQQLQQQIAHPNNPNNFYFQQQLQQQQFQQQLQQHQQHFQQQQQQQQQQQQQQQQQQQQQQQQLQQTGSPIDNRLNYNFNNSNNSDIQPMQQENNYRMNINDKK.

The segment covering 1–12 has biased composition (polar residues); the sequence is MEGSFQFNKSKQ. Disordered regions lie at residues 1–132, 156–223, and 269–386; these read MEGS…QYHP, FNVS…PEEI, and SFGH…DDEE. Composition is skewed to low complexity over residues 13–79 and 156–220; these read TNNN…NSTS and FNVS…QQQP. Residues 221–248 are a coiled coil; sequence EEIEGELNRERQERDKMLHEEAEIEQYK. The segment covering 271-291 has biased composition (polar residues); it reads GHITSANSDETTNNESGSPIN. Over residues 302–343 the composition is skewed to basic and acidic residues; sequence PHSSHNEDHQSDQDNHGQFMNDEHQSTDDDQNKSDNEKESES. The segment covering 344-354 has biased composition (polar residues); that stretch reads ARNSGDLQQKV. Over residues 376–386 the composition is skewed to acidic residues; it reads EGEEEDDDDEE. 7 LRR repeats span residues 400–421, 423–444, 446–468, 469–490, 492–513, 517–538, and 540–561; these read KSTK…VWSI, ELRD…IGLL, HLKR…YSLP, RLTT…INRL, SLKT…TNLH, NLVE…MLES, and HLQV…LKKS. Disordered regions lie at residues 690 to 717, 733 to 764, and 796 to 825; these read WDQQ…VLTG, PTQQ…QQQQ, and QQQQ…KDHQ. 2 stretches are compositionally biased toward polar residues: residues 701–717 and 733–757; these read SPNV…VLTG and PTQQ…HNNN. The 254-residue stretch at 851-1104 folds into the Protein kinase domain; it reads IAIGARIGRG…EILPIMEGMI (254 aa). ATP contacts are provided by residues 857–865 and Lys-878; that span reads IGRGGYGQV. Residue Asp-974 is the Proton acceptor of the active site. Disordered regions lie at residues 1118-1141 and 1245-1288; these read GRPI…QNMA and QQQL…NDKK. The segment covering 1257-1268 has biased composition (low complexity); it reads NRLNYNFNNSNN. Positions 1269 to 1282 are enriched in polar residues; it reads SDIQPMQQENNYRM.

The protein belongs to the protein kinase superfamily. TKL Ser/Thr protein kinase family.

The catalysed reaction is L-seryl-[protein] + ATP = O-phospho-L-seryl-[protein] + ADP + H(+). It catalyses the reaction L-threonyl-[protein] + ATP = O-phospho-L-threonyl-[protein] + ADP + H(+). This is Probable serine/threonine-protein kinase drkD (drkD) from Dictyostelium discoideum (Social amoeba).